Consider the following 350-residue polypeptide: Selenide, water dikinase (350 aa).

Residue C17 is part of the active site. Residues K20 and 48–50 (LFD) each bind ATP. D51 contributes to the Mg(2+) binding site. Residues D68, D91, and 139 to 141 (GHS) contribute to the ATP site. D91 lines the Mg(2+) pocket. D229 contacts Mg(2+).

It belongs to the selenophosphate synthase 1 family. Class I subfamily. As to quaternary structure, homodimer. It depends on Mg(2+) as a cofactor.

It catalyses the reaction hydrogenselenide + ATP + H2O = selenophosphate + AMP + phosphate + 2 H(+). Functionally, synthesizes selenophosphate from selenide and ATP. This chain is Selenide, water dikinase, found in Bdellovibrio bacteriovorus (strain ATCC 15356 / DSM 50701 / NCIMB 9529 / HD100).